Consider the following 428-residue polypeptide: MLDIQFIREHTDIVKESQRKRGESVELVDEVLSSDTARREALKAFEEARAQQKEIGKKVASVPADEKAKLIAETKELSQTVAEYKAKADSAAEEYTTAMWRLSNIVEPEAPEGGEDDYVVVKKVGQIRDFAAEGFEPKDHLTLGAGVAGIDMRRGVKVGGSRFYFLRGQVARMQIAMLTMAVDQAEEHGFTLAITPTLVRPEVMRGTGFLNSHADEIYRLREPDDQYLVGTSEVALAGMHENEILDLGNGPLRYCGWSSCYRREAGAAGKDTSGIIRVHQFDKVEMFVYAKQEDSYKEHEHLLAMEQEMLAKVEVPYRIIDTAAGDLGSSAARKFDCEAWVPTQGRYRELTSTSNCTEYQARRLNIRERMEDGGTRPVSTLNGTLATTRWLVAIMENHQQKDGSIEIPKAMRAYMGGKEVIEPTKWEA.

Threonine 231–glutamate 233 lines the L-serine pocket. ATP is bound by residues arginine 262–glutamate 264 and valine 278. Glutamate 285 serves as a coordination point for L-serine. Glutamate 349–serine 352 contacts ATP. Residue threonine 384 coordinates L-serine.

The protein belongs to the class-II aminoacyl-tRNA synthetase family. Type-1 seryl-tRNA synthetase subfamily. In terms of assembly, homodimer. The tRNA molecule binds across the dimer.

The protein localises to the cytoplasm. The catalysed reaction is tRNA(Ser) + L-serine + ATP = L-seryl-tRNA(Ser) + AMP + diphosphate + H(+). It carries out the reaction tRNA(Sec) + L-serine + ATP = L-seryl-tRNA(Sec) + AMP + diphosphate + H(+). Its pathway is aminoacyl-tRNA biosynthesis; selenocysteinyl-tRNA(Sec) biosynthesis; L-seryl-tRNA(Sec) from L-serine and tRNA(Sec): step 1/1. In terms of biological role, catalyzes the attachment of serine to tRNA(Ser). Is also able to aminoacylate tRNA(Sec) with serine, to form the misacylated tRNA L-seryl-tRNA(Sec), which will be further converted into selenocysteinyl-tRNA(Sec). This is Serine--tRNA ligase from Bifidobacterium longum subsp. infantis (strain ATCC 15697 / DSM 20088 / JCM 1222 / NCTC 11817 / S12).